Here is an 88-residue protein sequence, read N- to C-terminus: Sec-independent protein translocase protein TatA (88 aa).

A helical membrane pass occupies residues 1–21 (MGGISITQLLIIASIVVVLFG). A disordered region spans residues 39–88 (FKKSMSEDDNTTSTSSDKSSQDADFTAPPIEPKANLACPDEAKNKDKEHV). Over residues 49–62 (TTSTSSDKSSQDAD) the composition is skewed to low complexity. The segment covering 78 to 88 (DEAKNKDKEHV) has biased composition (basic and acidic residues).

Belongs to the TatA/E family. The Tat system comprises two distinct complexes: a TatABC complex, containing multiple copies of TatA, TatB and TatC subunits, and a separate TatA complex, containing only TatA subunits. Substrates initially bind to the TatABC complex, which probably triggers association of the separate TatA complex to form the active translocon.

It is found in the cell inner membrane. Functionally, part of the twin-arginine translocation (Tat) system that transports large folded proteins containing a characteristic twin-arginine motif in their signal peptide across membranes. TatA could form the protein-conducting channel of the Tat system. The chain is Sec-independent protein translocase protein TatA from Sodalis glossinidius (strain morsitans).